The following is a 440-amino-acid chain: Translation initiation factor eIF2B subunit gamma (440 aa).

The protein belongs to the eIF-2B gamma/epsilon subunits family. Component of the translation initiation factor 2B (eIF2B) complex which is a heterodecamer of two sets of five different subunits: alpha, beta, gamma, delta and epsilon. Subunits alpha, beta and delta comprise a regulatory subcomplex and subunits epsilon and gamma comprise a catalytic subcomplex. Within the complex, the hexameric regulatory complex resides at the center, with the two heterodimeric catalytic subcomplexes bound on opposite sides.

It localises to the cytoplasm. The protein resides in the cytosol. Its function is as follows. Acts as a component of the translation initiation factor 2B (eIF2B) complex, which catalyzes the exchange of GDP for GTP on the eukaryotic initiation factor 2 (eIF2) complex gamma subunit. Its guanine nucleotide exchange factor activity is repressed when bound to eIF2 complex phosphorylated on the alpha subunit, thereby limiting the amount of methionyl-initiator methionine tRNA available to the ribosome and consequently global translation is repressed. This is Translation initiation factor eIF2B subunit gamma (eif2b3) from Dictyostelium discoideum (Social amoeba).